Reading from the N-terminus, the 145-residue chain is 3-dehydroquinate dehydratase (145 aa).

Tyrosine 24 serves as the catalytic Proton acceptor. The substrate site is built by asparagine 75, histidine 81, and aspartate 88. The active-site Proton donor is histidine 101. Substrate contacts are provided by residues 102–103 (LS) and arginine 112.

Belongs to the type-II 3-dehydroquinase family. In terms of assembly, homododecamer.

The catalysed reaction is 3-dehydroquinate = 3-dehydroshikimate + H2O. It functions in the pathway metabolic intermediate biosynthesis; chorismate biosynthesis; chorismate from D-erythrose 4-phosphate and phosphoenolpyruvate: step 3/7. Catalyzes a trans-dehydration via an enolate intermediate. The polypeptide is 3-dehydroquinate dehydratase (Phenylobacterium zucineum (strain HLK1)).